Here is an 844-residue protein sequence, read N- to C-terminus: Bifunctional abietadiene synthase, chloroplastic (844 aa).

A chloroplast-targeting transit peptide spans 1-46; sequence QSIPHFSTTLNAGSSARKRRSLYLRWGKGSNKIIACVGEGATSVPY. K245 contributes to the substrate binding site. Residues D378 and D380 each coordinate Mg(2+). A DXDD motif motif is present at residues 378 to 381; that stretch reads DIDD. K465 is a substrate binding site. 5 residues coordinate Mg(2+): D597, D601, N741, T745, and E749. The DDXXD motif motif lies at 597–601; the sequence is DDLYD.

This sequence belongs to the terpene synthase family. Tpsd subfamily. Monomer. The cofactor is Mg(2+).

Its subcellular location is the plastid. The protein resides in the chloroplast. It carries out the reaction (2E,6E,10E)-geranylgeranyl diphosphate = (+)-copalyl diphosphate. The catalysed reaction is (+)-copalyl diphosphate = abieta-7,13-diene + diphosphate. The enzyme catalyses (+)-copalyl diphosphate = neoabietadiene + diphosphate. It catalyses the reaction (+)-copalyl diphosphate = abieta-8(14),12-diene + diphosphate. The protein operates within terpene metabolism; oleoresin biosynthesis. Functionally, involved in defensive oleoresin formation in conifers in response to insect attack or other injury. Involved in diterpene (C20) olefins biosynthesis. Bifunctional enzyme that catalyzes two sequential cyclizations of geranylgeranyl diphosphate (GGPP) to abietadiene. The copalyl diphosphate (CPP) intermediate diffuses freely between the 2 active sites in the enzyme. The sequence is that of Bifunctional abietadiene synthase, chloroplastic (LAS) from Abies balsamea (Balsam fir).